A 707-amino-acid polypeptide reads, in one-letter code: 65-kDa microtubule-associated protein 3 (707 aa).

5 coiled-coil regions span residues 49–84 (LEVY…CSAM), 157–179 (NLSM…EKID), 269–289 (QQEY…ITEA), 354–374 (IVDA…IKEE), and 464–486 (LEEY…DQKK). A disordered region spans residues 495-574 (QEALYGSKPS…PSRKQSMNPS (80 aa)). A compositionally biased stretch (low complexity) spans 500-512 (GSKPSPSKPLGGK). Phosphoserine is present on residues S504 and S528.

It belongs to the MAP65/ASE1 family. As to quaternary structure, forms a dimer. Binds to microtubules (MT) during cell division. Bundles polymerized MT via the formation of 25-nm crossbridges with centrally located endocytic MT, and midline phragmoplast MT. Expressed in all tissues enriched in dividing cells, such as the root and shoot apical meristem, foliar primordia, and young leaves, and embryos.

It localises to the nucleus. The protein resides in the cytoplasm. It is found in the cytoskeleton. Its subcellular location is the phragmoplast. In terms of biological role, microtubule-associated protein that plays a critical role in organizing the mitotic microtubule array during both early and late mitosis in all plant organs. Essential for the cytokinesis, especially in roots, by maintaining the integrity of the overlapped microtubules in the phragmoplast. Required during root morphogenesis. Needed for giant cell development during root knot nematode infection, where cytokinesis is initiated but not completed. The polypeptide is 65-kDa microtubule-associated protein 3 (MAP65-3) (Arabidopsis thaliana (Mouse-ear cress)).